Consider the following 116-residue polypeptide: Ribonuclease P protein component (116 aa).

The protein belongs to the RnpA family. In terms of assembly, consists of a catalytic RNA component (M1 or rnpB) and a protein subunit.

The catalysed reaction is Endonucleolytic cleavage of RNA, removing 5'-extranucleotides from tRNA precursor.. RNaseP catalyzes the removal of the 5'-leader sequence from pre-tRNA to produce the mature 5'-terminus. It can also cleave other RNA substrates such as 4.5S RNA. The protein component plays an auxiliary but essential role in vivo by binding to the 5'-leader sequence and broadening the substrate specificity of the ribozyme. The protein is Ribonuclease P protein component of Citrifermentans bemidjiense (strain ATCC BAA-1014 / DSM 16622 / JCM 12645 / Bem) (Geobacter bemidjiensis).